A 180-amino-acid polypeptide reads, in one-letter code: uncharacterized protein (180 aa).

In terms of domain architecture, HTH dtxR-type spans 17-80; sequence RRSRILHYLM…LIPNMGVRLT (64 aa).

This sequence belongs to the DtxR/MntR family.

This is an uncharacterized protein from Aeropyrum pernix (strain ATCC 700893 / DSM 11879 / JCM 9820 / NBRC 100138 / K1).